The sequence spans 655 residues: p-hydroxybenzoic acid efflux pump subunit AaeB (655 aa).

Transmembrane regions (helical) follow at residues 13 to 33 (FAVK…HFQL), 38 to 58 (WAVL…GGEP), 69 to 89 (LRII…IAMI), 93 to 113 (LLMI…SSLV), 121 to 141 (WGLA…EPLL), 152 to 172 (EIVI…PRSI), 370 to 390 (LFWL…IAVV), 407 to 427 (FIYG…VIIP), 431 to 451 (QSML…GIEV), 459 to 479 (MGAL…TFHF), and 482 to 502 (FLDS…VILL).

This sequence belongs to the aromatic acid exporter ArAE (TC 2.A.85) family.

It localises to the cell inner membrane. Functionally, forms an efflux pump with AaeA. Could function as a metabolic relief valve, allowing to eliminate certain compounds when they accumulate to high levels in the cell. The sequence is that of p-hydroxybenzoic acid efflux pump subunit AaeB from Escherichia coli O7:K1 (strain IAI39 / ExPEC).